We begin with the raw amino-acid sequence, 157 residues long: MSIIPSFFGGRRSNVFDPFSLDVWDPFKDFPLVTSSASEFGKETAAFVNTHIDWKETPQAHVFKADLPGLKKEEVKVELEEGKVLQISGERNKEKEEKNDKWHRVERSSGKFLRRFRLPENAKVDEVKAAMANGVVTVTVPKVEIKKPEVKAIDISG.

Residues 43 to 157 (ETAAFVNTHI…PEVKAIDISG (115 aa)) enclose the sHSP domain.

This sequence belongs to the small heat shock protein (HSP20) family. As to quaternary structure, forms oligomeric structures.

Its subcellular location is the cytoplasm. This chain is 17.8 kDa class I heat shock protein, found in Daucus carota (Wild carrot).